The sequence spans 286 residues: Protein METABOLIC NETWORK MODULATOR 1 (286 aa).

The span at 1 to 10 (MEKESHEENN) shows a compositional bias: basic and acidic residues. 3 disordered regions span residues 1 to 60 (MEKE…DDEA), 123 to 146 (VMHH…GSGV), and 181 to 204 (GGER…SGAS). Residues 20–29 (KRKRGRPRKQ) show a composition bias toward basic residues. Over residues 30–39 (LKLESNEHSL) the composition is skewed to basic and acidic residues. Residues 131–140 (KRGRKSRFRE) are compositionally biased toward basic residues. The segment covering 191-204 (PMQTETGSQASGAS) has biased composition (polar residues).

As to expression, mailny observed in young seedlings and in emerging leaves.

In terms of biological role, lineage-specific modulator of primary metabolism. Influences flowering time. This chain is Protein METABOLIC NETWORK MODULATOR 1, found in Arabidopsis thaliana (Mouse-ear cress).